The chain runs to 264 residues: Cercarial protease (264 aa).

Positions 1–19 (MSNRWRFVVVVTLFTYCLT) are cleaved as a signal peptide. Residues 20–27 (FERVSTWL) constitute a propeptide that is removed on maturation. A Peptidase S1 domain is found at 28–264 (IRSGEPVQHP…RMLDFVRSNI (237 aa)). A disulfide bond links Cys53 and Cys69. Residues His68 and Asp126 each act as charge relay system in the active site. A disulfide bridge connects residues Cys192 and Cys202. Catalysis depends on Ser218, which acts as the Charge relay system.

The protein belongs to the peptidase S1 family. As to expression, acetabular (penetration) glands.

With respect to regulation, activated by an autocatalytic mechanism. Functionally, this protease cleaves elastin and thus facilitates penetration of schistosome parasite larvae through elastin-rich tissue of the host. This is Cercarial protease from Schistosoma mansoni (Blood fluke).